A 269-amino-acid polypeptide reads, in one-letter code: uncharacterized protein (269 aa).

Helical transmembrane passes span 64-84 (FVYF…LAGV), 125-145 (YGIA…FLSF), 169-189 (FFIS…FLVL), and 230-250 (VFAT…IAIF).

The protein resides in the cell membrane. This is an uncharacterized protein from Mycoplasma genitalium (strain ATCC 33530 / DSM 19775 / NCTC 10195 / G37) (Mycoplasmoides genitalium).